We begin with the raw amino-acid sequence, 88 residues long: UPF0250 protein Sfri_0694 (88 aa).

The protein belongs to the UPF0250 family.

This is UPF0250 protein Sfri_0694 from Shewanella frigidimarina (strain NCIMB 400).